Here is a 251-residue protein sequence, read N- to C-terminus: Hydroxyacylglutathione hydrolase (251 aa).

Zn(2+) contacts are provided by His53, His55, Asp57, His58, His110, Asp127, and His165.

It belongs to the metallo-beta-lactamase superfamily. Glyoxalase II family. In terms of assembly, monomer. Zn(2+) serves as cofactor.

The enzyme catalyses an S-(2-hydroxyacyl)glutathione + H2O = a 2-hydroxy carboxylate + glutathione + H(+). It participates in secondary metabolite metabolism; methylglyoxal degradation; (R)-lactate from methylglyoxal: step 2/2. Its function is as follows. Thiolesterase that catalyzes the hydrolysis of S-D-lactoyl-glutathione to form glutathione and D-lactic acid. The chain is Hydroxyacylglutathione hydrolase from Salmonella paratyphi C (strain RKS4594).